Here is a 370-residue protein sequence, read N- to C-terminus: S-adenosylmethionine decarboxylase proenzyme (370 aa).

Phe28 provides a ligand contact to substrate. Active-site residues include Glu29 and Glu32. Substrate is bound at residue Glu85. Ser86 serves as the catalytic Schiff-base intermediate with substrate; via pyruvic acid. Ser86 is subject to Pyruvic acid (Ser); by autocatalysis. Cys100 (proton donor; for catalytic activity) is an active-site residue. Residues Ser249 and His262 each act as proton acceptor; for processing activity in the active site. Glu266 serves as a coordination point for substrate.

Belongs to the eukaryotic AdoMetDC family. As to quaternary structure, forms a heterodimer with catalytically inactive AdoMetDC prozyme; heterodimerization is required to activate AdoMetDC. Requires pyruvate as cofactor. In terms of processing, is synthesized initially as an inactive proenzyme. Formation of the active enzyme involves a self-maturation process in which the active site pyruvoyl group is generated from an internal serine residue via an autocatalytic post-translational modification. Two non-identical subunits are generated from the proenzyme in this reaction, and the pyruvate is formed at the N-terminus of the alpha chain, which is derived from the carboxyl end of the proenzyme. The post-translation cleavage follows an unusual pathway, termed non-hydrolytic serinolysis, in which the side chain hydroxyl group of the serine supplies its oxygen atom to form the C-terminus of the beta chain, while the remainder of the serine residue undergoes an oxidative deamination to produce ammonia and the pyruvoyl group blocking the N-terminus of the alpha chain.

The catalysed reaction is S-adenosyl-L-methionine + H(+) = S-adenosyl 3-(methylsulfanyl)propylamine + CO2. It functions in the pathway amine and polyamine biosynthesis; S-adenosylmethioninamine biosynthesis; S-adenosylmethioninamine from S-adenosyl-L-methionine: step 1/1. Its activity is regulated as follows. Allosterically activated by AdoMetDC prozyme. Activated by putrescine and to a lesser extent by spermidine, norspermidine and spermine. Inhibited by 5'-([(Z)-4-amino-2-butenyl]methylamino)-5'-deoxyadenosine (MDL 73811). In terms of biological role, in association with the catalytically inactive AdoMetDC prozyme, catalyzes the decarboxylation of S-adenosyl-L-methionine which is essential for the biosynthesis of the polyamine spermidine. Required for growth and survival during the bloodstream life cycle stage. The polypeptide is S-adenosylmethionine decarboxylase proenzyme (Trypanosoma brucei brucei).